We begin with the raw amino-acid sequence, 149 residues long: Cytochrome c-556 (149 aa).

The N-terminal stretch at Met-1–Ala-20 is a signal peptide. 4 residues coordinate heme c: Met-32, Cys-137, Cys-140, and His-141.

In terms of assembly, monomer. Post-translationally, binds 1 heme c group covalently per subunit.

Its function is as follows. Low-spin monoheme cytochrome c. The polypeptide is Cytochrome c-556 (Rhodopseudomonas palustris (strain ATCC BAA-98 / CGA009)).